The chain runs to 351 residues: UPF0421 protein BC_2748 (351 aa).

4 helical membrane passes run 19-39, 74-94, 109-129, and 131-151; these read IAVF…IFAV, FTFF…FTIV, TLTA…AFLI, and LATT…IFPP.

This sequence belongs to the UPF0421 family.

The protein localises to the cell membrane. The polypeptide is UPF0421 protein BC_2748 (Bacillus cereus (strain ATCC 14579 / DSM 31 / CCUG 7414 / JCM 2152 / NBRC 15305 / NCIMB 9373 / NCTC 2599 / NRRL B-3711)).